The primary structure comprises 729 residues: Solute carrier family 15 member 2 (729 aa).

The tract at residues 1-34 is disordered; sequence MNPFQKNESKETLFSPVSTEEMLPGPPSPPKKST. The Cytoplasmic segment spans residues 1–57; the sequence is MNPFQKNESKETLFSPVSTEEMLPGPPSPPKKSTPKLFGSSYPLSIAFIVVNEFCER. The residue at position 9 (S9) is a Phosphoserine. At T12 the chain carries Phosphothreonine. Phosphoserine is present on S28. The chain crosses the membrane as a helical span at residues 58 to 78; sequence FSYYGMKAVLTLYFLYFLHWN. At 79 to 87 the chain is on the extracellular side; that stretch reads EDTSTSVYH. A helical transmembrane segment spans residues 88–108; it reads AFSSLCYFTPILGAAIADSWL. Residues 109-113 are Cytoplasmic-facing; it reads GKFKT. The chain crosses the membrane as a helical span at residues 114–134; the sequence is IIYLSLVYVLGHVFKSLGAIP. At 135–139 the chain is on the extracellular side; it reads ILGGK. The helical transmembrane segment at 140–160 threads the bilayer; it reads MLHTILSLVGLSLIALGTGGI. At 161–183 the chain is on the cytoplasmic side; it reads KPCVAAFGGDQFEEEHAEARTRY. The chain crosses the membrane as a helical span at residues 184–204; it reads FSVFYLSINAGSLISTFITPM. Topologically, residues 205 to 217 are extracellular; it reads LRGDVKCFGEDCY. The chain crosses the membrane as a helical span at residues 218–238; it reads ALAFGIPGLLMVLALVVFAMG. The Cytoplasmic portion of the chain corresponds to 239–295; it reads SKMYRKPPPEGNIVAQVTKCIWFAICNRFRNRSEDIPKRQHWLDWAAEKYPKHLIMD. Residues 296 to 316 traverse the membrane as a helical segment; sequence VKALTRILFLYIPLPMFWALL. Residues 317–343 are Extracellular-facing; that stretch reads DQQGSRWTLQANKMDGDLGFFVLQPDQ. A helical transmembrane segment spans residues 344 to 364; the sequence is MQVLNPFLVLVFIPLFDLVIY. The Cytoplasmic portion of the chain corresponds to 365–380; that stretch reads RLISKCGVNFSSLRKM. Residues 381–401 traverse the membrane as a helical segment; it reads AVGMILACLAFAVAALVEIKI. At 402–611 the chain is on the extracellular side; that stretch reads NGMIHPQPAS…PANKLSIAWQ (210 aa). Residues 402–611 are extracellular domain (ECD); that stretch reads NGMIHPQPAS…PANKLSIAWQ (210 aa). 4 N-linked (GlcNAc...) asparagine glycosylation sites follow: N448, N472, N528, and N587. A helical transmembrane segment spans residues 612–632; that stretch reads LPQYVLVTAAEVMFSVTGLEF. Topologically, residues 633–643 are cytoplasmic; that stretch reads SYSQAPSSMKS. A helical transmembrane segment spans residues 644 to 664; that stretch reads VLQAAWLLTVAVGNIIVLIVA. Topologically, residues 665–674 are extracellular; that stretch reads QFSGLVQWAE. Residues 675–695 traverse the membrane as a helical segment; that stretch reads FVLFSCLLLVVCLIFSVMGYY. The Cytoplasmic segment spans residues 696–729; the sequence is YVPLKSEGIHEATEKQIPHIQGNMINLETKNTRL.

It belongs to the major facilitator superfamily. Proton-dependent oligopeptide transporter (POT/PTR) (TC 2.A.17) family. In terms of assembly, interacts (via extracellular domain region) with trypsin. As to expression, expressed in kidney brush border cells (at protein level). Highly expressed in macrophages.

The protein localises to the apical cell membrane. Its subcellular location is the cytoplasmic vesicle. The protein resides in the phagosome membrane. It is found in the cell membrane. The enzyme catalyses N-acetyl-D-muramoyl-L-alanyl-D-isoglutamine(out) + 3 H(+)(out) = N-acetyl-D-muramoyl-L-alanyl-D-isoglutamine(in) + 3 H(+)(in). It carries out the reaction a dipeptide(out) + 2 H(+)(out) = a dipeptide(in) + 2 H(+)(in). It catalyses the reaction glycyl-L-leucine(out) + 2 H(+)(out) = glycyl-L-leucine(in) + 2 H(+)(in). The catalysed reaction is glycyl-L-lysine(out) + 2 H(+)(out) = glycyl-L-lysine(in) + 2 H(+)(in). The enzyme catalyses glycyl-L-glutamate(out) + 3 H(+)(out) = glycyl-L-glutamate(in) + 3 H(+)(in). It carries out the reaction L-alanyl-L-alanine(out) + 2 H(+)(out) = L-alanyl-L-alanine(in) + 2 H(+)(in). It catalyses the reaction an L-amino acid tripeptide(out) + 2 H(+)(out) = an L-amino acid tripeptide(in) + 2 H(+)(in). The catalysed reaction is carnosine(out) + 2 H(+)(out) = carnosine(in) + 2 H(+)(in). Proton-coupled amino-acid transporter that transports oligopeptides of 2 to 4 amino acids with a preference for dipeptides. Transports neutral and anionic dipeptides with a proton to peptide stoichiometry of 2:1 or 3:1. In kidney, involved in the absorption of circulating di- and tripeptides from the glomerular filtrate. Can also transport beta-lactam antibiotics, such as the aminocephalosporin cefadroxil, and other antiviral and anticancer drugs. Transports the dipeptide-like aminopeptidase inhibitor bestatin. Also able to transport carnosine. Involved in innate immunity by promoting the detection of microbial pathogens by NOD-like receptors (NLRs). Mediates transport of bacterial peptidoglycans across the plasma membrane or, in macrophages, the phagosome membrane: catalyzes the transport of certain bacterial peptidoglycans, such as muramyl dipeptide (MDP), the NOD2 ligand. The protein is Solute carrier family 15 member 2 of Mus musculus (Mouse).